Here is a 351-residue protein sequence, read N- to C-terminus: Phosphoribosylformylglycinamidine cyclo-ligase (351 aa).

The protein belongs to the AIR synthase family.

The protein resides in the cytoplasm. It catalyses the reaction 2-formamido-N(1)-(5-O-phospho-beta-D-ribosyl)acetamidine + ATP = 5-amino-1-(5-phospho-beta-D-ribosyl)imidazole + ADP + phosphate + H(+). Its pathway is purine metabolism; IMP biosynthesis via de novo pathway; 5-amino-1-(5-phospho-D-ribosyl)imidazole from N(2)-formyl-N(1)-(5-phospho-D-ribosyl)glycinamide: step 2/2. The polypeptide is Phosphoribosylformylglycinamidine cyclo-ligase (Synechococcus sp. (strain JA-3-3Ab) (Cyanobacteria bacterium Yellowstone A-Prime)).